A 477-amino-acid chain; its full sequence is PTS system MurNAc-GlcNAc-specific EIIBC component (477 aa).

The PTS EIIB type-1 domain maps to 5-87; it reads QQLAHHILDA…VKLSGVQLGE (83 aa). The Phosphocysteine intermediate; for EIIB activity role is filled by C27. The interval 91–113 is disordered; that stretch reads HRSNTSNIKNQAQQNKREFQQKR. A compositionally biased stretch (polar residues) spans 92-104; that stretch reads RSNTSNIKNQAQQ. Residues 123-477 enclose the PTS EIIC type-1 domain; it reads KSIANIFIPL…EMRNLNKLGD (355 aa). Helical transmembrane passes span 128-148, 167-187, 192-212, 227-247, 267-287, 298-318, 342-362, 377-397, 401-421, and 443-463; these read IFIP…IAAV, VAVL…FTGF, VFGA…LTGI, LIAG…LSII, ISLL…AGFI, VIGV…LPLV, LLPI…ALWV, ALPV…TLPL, FITA…IGHI, and LGYI…TYFF.

Its subcellular location is the cell membrane. It carries out the reaction N-acetyl-beta-D-muramate-(1-&gt;4)-N-acetyl-D-glucosamine(out) + N(pros)-phospho-L-histidyl-[protein] = 6-phospho-N-acetyl-beta-D-muramate-(1-&gt;4)-N-acetyl-D-glucosamine(in) + L-histidyl-[protein]. The protein operates within cell wall biogenesis; peptidoglycan recycling. The phosphoenolpyruvate-dependent sugar phosphotransferase system (sugar PTS), a major carbohydrate active transport system, catalyzes the phosphorylation of incoming sugar substrates concomitantly with their translocation across the cell membrane. This system is involved in the uptake and phosphorylation of MurNAc-GlcNAc, the principle peptidoglycan turnover product of S.aureus, yielding cytoplasmic MurNAc 6P-GlcNAc. The protein is PTS system MurNAc-GlcNAc-specific EIIBC component of Staphylococcus haemolyticus (strain JCSC1435).